Reading from the N-terminus, the 162-residue chain is MTIPFRVGQGFDVHALVTGRPLIIGGVRIEHSHGLLGHSDADVLLHAVTDAILGAAGLGDIGRHFPDTDPRFKGADSRVLLREAMARVDAAGWQVVNVDATVHAQAPKIGPHAPAMVANIAADLGIAHDLVNIKAKTNEGLGYLGRKEGIAATVVTLLARQA.

Residues Asp-12 and His-14 each coordinate a divalent metal cation. Residues 12-14 (DVH) and 38-39 (HS) contribute to the 4-CDP-2-C-methyl-D-erythritol 2-phosphate site. His-46 lines the a divalent metal cation pocket. 4-CDP-2-C-methyl-D-erythritol 2-phosphate is bound by residues 60 to 62 (DIG), 65 to 69 (FPDTD), and Arg-146.

This sequence belongs to the IspF family. As to quaternary structure, homotrimer. The cofactor is a divalent metal cation.

The enzyme catalyses 4-CDP-2-C-methyl-D-erythritol 2-phosphate = 2-C-methyl-D-erythritol 2,4-cyclic diphosphate + CMP. It functions in the pathway isoprenoid biosynthesis; isopentenyl diphosphate biosynthesis via DXP pathway; isopentenyl diphosphate from 1-deoxy-D-xylulose 5-phosphate: step 4/6. Involved in the biosynthesis of isopentenyl diphosphate (IPP) and dimethylallyl diphosphate (DMAPP), two major building blocks of isoprenoid compounds. Catalyzes the conversion of 4-diphosphocytidyl-2-C-methyl-D-erythritol 2-phosphate (CDP-ME2P) to 2-C-methyl-D-erythritol 2,4-cyclodiphosphate (ME-CPP) with a corresponding release of cytidine 5-monophosphate (CMP). The protein is 2-C-methyl-D-erythritol 2,4-cyclodiphosphate synthase of Bordetella avium (strain 197N).